The following is a 333-amino-acid chain: Large ribosomal subunit protein mL44 (333 aa).

A mitochondrion-targeting transit peptide spans 1 to 30; it reads MASAVFRLLQQGPRRLLAPAVPTLAPPVRG. The region spanning 86-228 is the RNase III domain; that stretch reads DLLKTAFINS…LITQMTGKEL (143 aa). In terms of domain architecture, DRBM spans 236 to 306; the sequence is NPMGLLVEEL…ARVALRKLYG (71 aa). The segment covering 311–327 has biased composition (basic and acidic residues); the sequence is RRPWDYSKPKESPKRAE. The tract at residues 311–333 is disordered; it reads RRPWDYSKPKESPKRAEQTSVAS.

It belongs to the ribonuclease III family. Mitochondrion-specific ribosomal protein mL44 subfamily. As to quaternary structure, component of the mitochondrial ribosome large subunit (39S) which comprises a 16S rRNA and about 50 distinct proteins.

It localises to the mitochondrion. Functionally, component of the 39S subunit of mitochondrial ribosome. May have a function in the assembly/stability of nascent mitochondrial polypeptides exiting the ribosome. This chain is Large ribosomal subunit protein mL44 (Mrpl44), found in Mus musculus (Mouse).